The sequence spans 146 residues: UPF0735 ACT domain-containing protein CHY_1913 (146 aa).

An ACT domain is found at 70-145 (TLALNLEHRA…GVSKVELVGQ (76 aa)).

Belongs to the UPF0735 family.

The sequence is that of UPF0735 ACT domain-containing protein CHY_1913 from Carboxydothermus hydrogenoformans (strain ATCC BAA-161 / DSM 6008 / Z-2901).